The primary structure comprises 1172 residues: Thrombospondin-2 (1172 aa).

A signal peptide spans 1–18 (MLWALALLALGIGPRASA). The 197-residue stretch at 19-215 (GDHVKDTSFD…LQNVHLVFAD (197 aa)) folds into the Laminin G-like domain. The tract at residues 19 to 232 (GDHVKDTSFD…KKGCQHSQGA (214 aa)) is heparin-binding. N151, N316, and N330 each carry an N-linked (GlcNAc...) asparagine glycan. A VWFC domain is found at 318-375 (SACVQEGRIFAENETWVVDSCTTCTCKKFKTVCHQITCSPATCANPSFVEGECCPSCS). TSP type-1 domains follow at residues 381-431 (DEGW…GKCD), 437-492 (NGGW…DPCP), and 494-549 (DGRW…RSCP). Intrachain disulfides connect C393/C425, C397/C430, C408/C415, C449/C486, C453/C491, C464/C476, C506/C543, C510/C548, C521/C533, C553/C564, C558/C574, C577/C588, C594/C610, C601/C619, C622/C646, C652/C665, C659/C678, C680/C691, C707/C715, C720/C740, C756/C776, C779/C799, C815/C835, C838/C858, C876/C896, C912/C932, and C948/C1169. N457 carries an N-linked (GlcNAc...) asparagine glycan. The EGF-like 1 domain occupies 549-589 (PIDGCLSNPCFPGAKCNSFPDGSWSCGSCPVGFLGNGTHCE). A glycan (N-linked (GlcNAc...) asparagine) is linked at N584. The EGF-like 2 domain occupies 648–692 (PENPCKDKTHSCHKNAECIYLGHFSDPMYKCECQIGYAGDGLICG). TSP type-3 repeat units lie at residues 693–728 (EDSD…NSGQ), 729–764 (EDFD…NPRQ), 765–787 (LDYD…NPAQ), 788–823 (IDTD…NTDQ), 824–846 (RDTD…NPDQ), 847–884 (IDQD…NSNQ), 885–920 (ADHD…NPDQ), and 921–956 (EDSD…AITE). N-linked (GlcNAc...) asparagine glycosylation is present at N710. The interval 727–752 (GQEDFDKDGIGDACDEDDDNDGVSDE) is disordered. A compositionally biased stretch (acidic residues) spans 739 to 749 (ACDEDDDNDGV). The disordered stretch occupies residues 846 to 938 (QIDQDNDLVG…GDICKDDFDN (93 aa)). A compositionally biased stretch (acidic residues) spans 847–866 (IDQDNDLVGDQCDNNEDIDD). Over residues 870–884 (QNNQDNCPYISNSNQ) the composition is skewed to polar residues. Positions 885-895 (ADHDNDGKGDA) are enriched in basic and acidic residues. Positions 896–905 (CDSDDDNDGV) are enriched in acidic residues. A compositionally biased stretch (basic and acidic residues) spans 925 to 935 (GDGRGDICKDD). A Cell attachment site motif is present at residues 928–930 (RGD). In terms of domain architecture, TSP C-terminal spans 960–1172 (RNFQMVPLDP…SDLKYECRDA (213 aa)). N-linked (GlcNAc...) asparagine glycosylation is present at N1069.

It belongs to the thrombospondin family. In terms of assembly, homotrimer; disulfide-linked. Can bind to fibrinogen, fibronectin, laminin and type V collagen. Interacts (via the TSP type I repeats) with CD36; the interaction conveys an antiangiogenic effect. Interacts (via the TSP type I repeats) with HRG; the interaction blocks the antiangiogenic effect of THBS2 with CD36. Can bind to fibrinogen, fibronectin, laminin.

Functionally, adhesive glycoprotein that mediates cell-to-cell and cell-to-matrix interactions. Ligand for CD36 mediating antiangiogenic properties. The protein is Thrombospondin-2 (Thbs2) of Mus musculus (Mouse).